A 281-amino-acid polypeptide reads, in one-letter code: Thioesterase PikA5 (281 aa).

A thioesterase region spans residues Arg-26–Asp-249. The active-site Nucleophile; for thioesterase activity is the Ser-99. The Proton acceptor; for thioesterase activity role is filled by His-233.

Belongs to the thioesterase family.

Its pathway is antibiotic biosynthesis. Its function is as follows. Involved in the biosynthesis of 12- and 14-membered ring macrolactone antibiotics such as methymycin, neomethymycin, narbomycin and pikromycin. Responsible for removing mis-formed acyl moieties (aberrant decarboxylation) that are bound to the PKS and could block it. Catalyzes the cleavage of methylmalonyl-[acp]. It exhibits some acyl-group specificity, and catalyzes the cleavage of propionyl and butyryl derivatives faster than acetyl malonyl or methylmalonyl derivatives. The polypeptide is Thioesterase PikA5 (Streptomyces venezuelae).